The chain runs to 452 residues: Pup--protein ligase (452 aa).

Glu-9 is a Mg(2+) binding site. Arg-53 contributes to the ATP binding site. Residue Tyr-55 participates in Mg(2+) binding. Catalysis depends on Asp-57, which acts as the Proton acceptor. Position 63 (Glu-63) interacts with Mg(2+). ATP-binding residues include Thr-66 and Trp-419.

This sequence belongs to the Pup ligase/Pup deamidase family. Pup-conjugating enzyme subfamily. In terms of processing, pupylated at an undetermined lysine residue by the prokaryotic ubiquitin-like protein Pup, which leads to its degradation by the proteasome and thereby constitutes a negative auto-regulation.

The catalysed reaction is ATP + [prokaryotic ubiquitin-like protein]-L-glutamate + [protein]-L-lysine = ADP + phosphate + N(6)-([prokaryotic ubiquitin-like protein]-gamma-L-glutamyl)-[protein]-L-lysine.. The protein operates within protein degradation; proteasomal Pup-dependent pathway. It participates in protein modification; protein pupylation. In terms of biological role, catalyzes the covalent attachment of the prokaryotic ubiquitin-like protein modifier Pup to the proteasomal substrate proteins, thereby targeting them for proteasomal degradation. This tagging system is termed pupylation. The ligation reaction likely involves the side-chain carboxylate of the C-terminal glutamate of Pup and the side-chain amino group of a substrate lysine. This is Pup--protein ligase (pafA) from Mycolicibacterium smegmatis (strain ATCC 700084 / mc(2)155) (Mycobacterium smegmatis).